The chain runs to 335 residues: MTWFTPEVIDVIISVVKAIVILLAVVVAGALLSFVERRLLGWWQDRYGPNRVGPFGMFQIAADMLKMFFKEDWTPPFADKVIFTLAPVVAMSALLIAFAVIPITPTWGVADLNIGLLFFFAMAGLSVYAVLFAGWSSNNKFALLGSLRASAQTVSYEVFMGLALMGIVVQVGSFNMRDIVEYQAQNLWFIIPQFFGFCTFFIAGVAVTHRHPFDQPEAEQELADGYHIEYAGMKWGMFFVGEYIGIILISALLVTLFFGGWHGPFGILPQLAFFWFFLKTAFFIMLFILLRASIPRPRYDQVMDFSWRFCLPLTLINLLVTAAVVLLNTPAAAVQ.

8 helical membrane-spanning segments follow: residues 11 to 31 (VIIS…AGAL), 81 to 101 (VIFT…FAVI), 114 to 134 (IGLL…LFAG), 154 to 174 (VSYE…VGSF), 187 to 207 (LWFI…GVAV), 238 to 258 (FFVG…TLFF), 270 to 290 (QLAF…FILL), and 309 to 329 (FCLP…LLNT).

The protein belongs to the complex I subunit 1 family. In terms of assembly, NDH-1 is composed of 13 different subunits. Subunits NuoA, H, J, K, L, M, N constitute the membrane sector of the complex.

The protein localises to the cell inner membrane. The enzyme catalyses a quinone + NADH + 5 H(+)(in) = a quinol + NAD(+) + 4 H(+)(out). NDH-1 shuttles electrons from NADH, via FMN and iron-sulfur (Fe-S) centers, to quinones in the respiratory chain. The immediate electron acceptor for the enzyme in this species is believed to be ubiquinone. Couples the redox reaction to proton translocation (for every two electrons transferred, four hydrogen ions are translocated across the cytoplasmic membrane), and thus conserves the redox energy in a proton gradient. This subunit may bind ubiquinone. This chain is NADH-quinone oxidoreductase subunit H, found in Pseudomonas fluorescens (strain SBW25).